Consider the following 393-residue polypeptide: S-adenosylmethionine synthase (393 aa).

Residue histidine 16 coordinates ATP. Aspartate 18 lines the Mg(2+) pocket. Glutamate 44 contributes to the K(+) binding site. L-methionine contacts are provided by glutamate 57 and glutamine 100. Residues 100–110 (QSNDIAQGVDH) form a flexible loop region. Residues 167 to 169 (DAK), 238 to 239 (RF), aspartate 247, 253 to 254 (RK), alanine 270, and lysine 274 each bind ATP. Aspartate 247 serves as a coordination point for L-methionine. Lysine 278 provides a ligand contact to L-methionine.

The protein belongs to the AdoMet synthase family. In terms of assembly, homotetramer; dimer of dimers. Requires Mg(2+) as cofactor. The cofactor is K(+).

Its subcellular location is the cytoplasm. It catalyses the reaction L-methionine + ATP + H2O = S-adenosyl-L-methionine + phosphate + diphosphate. Its pathway is amino-acid biosynthesis; S-adenosyl-L-methionine biosynthesis; S-adenosyl-L-methionine from L-methionine: step 1/1. Its function is as follows. Catalyzes the formation of S-adenosylmethionine (AdoMet) from methionine and ATP. The overall synthetic reaction is composed of two sequential steps, AdoMet formation and the subsequent tripolyphosphate hydrolysis which occurs prior to release of AdoMet from the enzyme. The polypeptide is S-adenosylmethionine synthase (Paracidovorax citrulli (strain AAC00-1) (Acidovorax citrulli)).